The chain runs to 426 residues: Elongation factor 1-alpha (426 aa).

The region spanning 5–221 (KPHINLAVIG…NALKEPEKPT (217 aa)) is the tr-type G domain. Residues 14–21 (GHIDHGKS) are G1. 14-21 (GHIDHGKS) provides a ligand contact to GTP. S21 is a Mg(2+) binding site. The interval 70-74 (GITID) is G2. Residues 91–94 (DCPG) are G3. GTP contacts are provided by residues 91–95 (DCPGH) and 146–149 (NKMD). A G4 region spans residues 146–149 (NKMD). A G5 region spans residues 185 to 187 (SAF).

It belongs to the TRAFAC class translation factor GTPase superfamily. Classic translation factor GTPase family. EF-Tu/EF-1A subfamily.

Its subcellular location is the cytoplasm. It catalyses the reaction GTP + H2O = GDP + phosphate + H(+). Its function is as follows. GTP hydrolase that promotes the GTP-dependent binding of aminoacyl-tRNA to the A-site of ribosomes during protein biosynthesis. The chain is Elongation factor 1-alpha from Methanocella arvoryzae (strain DSM 22066 / NBRC 105507 / MRE50).